The following is a 1208-amino-acid chain: DNA-directed RNA polymerase subunit beta (1208 aa).

It belongs to the RNA polymerase beta chain family. As to quaternary structure, the RNAP catalytic core consists of 2 alpha, 1 beta, 1 beta' and 1 omega subunit. When a sigma factor is associated with the core the holoenzyme is formed, which can initiate transcription.

It catalyses the reaction RNA(n) + a ribonucleoside 5'-triphosphate = RNA(n+1) + diphosphate. In terms of biological role, DNA-dependent RNA polymerase catalyzes the transcription of DNA into RNA using the four ribonucleoside triphosphates as substrates. This is DNA-directed RNA polymerase subunit beta from Enterococcus faecium (Streptococcus faecium).